A 176-amino-acid chain; its full sequence is Large ribosomal subunit protein uL10 (176 aa).

It belongs to the universal ribosomal protein uL10 family. In terms of assembly, part of the ribosomal stalk of the 50S ribosomal subunit. The N-terminus interacts with L11 and the large rRNA to form the base of the stalk. The C-terminus forms an elongated spine to which L12 dimers bind in a sequential fashion forming a multimeric L10(L12)X complex.

Forms part of the ribosomal stalk, playing a central role in the interaction of the ribosome with GTP-bound translation factors. This Sorangium cellulosum (strain So ce56) (Polyangium cellulosum (strain So ce56)) protein is Large ribosomal subunit protein uL10.